Here is a 186-residue protein sequence, read N- to C-terminus: Lipid A palmitoyltransferase PagP (186 aa).

The signal sequence occupies residues 1-25 (MNVSKYVAIFSFVFIQLISVGKVFA). Residues His58, Asp101, and Ser102 contribute to the active site.

The protein belongs to the lipid A palmitoyltransferase family. Homodimer.

The protein resides in the cell outer membrane. It carries out the reaction lipid A (E. coli) + a 1-hexadecanoyl-2-acyl-sn-glycero-3-phosphocholine = hepta-acyl lipid A (E. coli) + a 2-acyl-sn-glycero-3-phosphocholine. It catalyses the reaction lipid IIA + a 1-hexadecanoyl-2-acyl-sn-glycero-3-phosphocholine = lipid IIB + a 2-acyl-sn-glycero-3-phosphocholine. The catalysed reaction is lipid IVA (E. coli) + a 1-hexadecanoyl-2-acyl-sn-glycero-3-phosphocholine = lipid IVB (E. coli) + a 2-acyl-sn-glycero-3-phosphocholine. Its function is as follows. Transfers a palmitate residue from the sn-1 position of a phospholipid to the N-linked hydroxymyristate on the proximal unit of lipid A or its precursors. The chain is Lipid A palmitoyltransferase PagP from Escherichia coli O157:H7.